Reading from the N-terminus, the 447-residue chain is N-succinylarginine dihydrolase (447 aa).

Substrate-binding positions include 19 to 28, Asn-110, and 137 to 138; these read AGLSFGNEAS and HR. The active site involves Glu-174. A substrate-binding site is contributed by Arg-212. His-248 is an active-site residue. 2 residues coordinate substrate: Asp-250 and Asn-359. Catalysis depends on Cys-365, which acts as the Nucleophile.

Belongs to the succinylarginine dihydrolase family. Homodimer.

The catalysed reaction is N(2)-succinyl-L-arginine + 2 H2O + 2 H(+) = N(2)-succinyl-L-ornithine + 2 NH4(+) + CO2. The protein operates within amino-acid degradation; L-arginine degradation via AST pathway; L-glutamate and succinate from L-arginine: step 2/5. In terms of biological role, catalyzes the hydrolysis of N(2)-succinylarginine into N(2)-succinylornithine, ammonia and CO(2). The chain is N-succinylarginine dihydrolase from Escherichia coli (strain ATCC 8739 / DSM 1576 / NBRC 3972 / NCIMB 8545 / WDCM 00012 / Crooks).